A 195-amino-acid chain; its full sequence is MTDPHLNTPQVSTSPTFERSQDFLNIDEPPCAQETPSVSTFNLPGPSAPAQSVDKPVPMIRRRSTNYMDALNSREQARERESSIGEHAPGAERRSSGPMDFQNTIHNMQYRTTNDSDLSHAGVDMGDSISHTPICSRAGNRPIFKNSYLDNNSNGNSARVPHGSPPQLGTRRKSSFKYEDFKKDIYNQLHMFGEK.

Residues 1–18 (MTDPHLNTPQVSTSPTFE) are compositionally biased toward polar residues. A disordered region spans residues 1-101 (MTDPHLNTPQ…ERRSSGPMDF (101 aa)). Serine 64 carries the phosphoserine modification. Threonine 65 carries the phosphothreonine modification. Positions 75-95 (EQARERESSIGEHAPGAERRS) are enriched in basic and acidic residues. 2 positions are modified to phosphoserine: serine 95 and serine 96. The residue at position 132 (threonine 132) is a Phosphothreonine. The tract at residues 146–175 (NSYLDNNSNGNSARVPHGSPPQLGTRRKSS) is disordered. Positions 148 to 157 (YLDNNSNGNS) are enriched in polar residues. The residue at position 164 (serine 164) is a Phosphoserine.

As to quaternary structure, interacts with GDB1.

The protein localises to the cytoplasm. Its function is as follows. Acts as an inhibitor of GDB1, enhancing the ability of cells to store glucose as glycogen. The polypeptide is Inhibitor of glycogen debranching 1 (IGD1) (Saccharomyces cerevisiae (strain ATCC 204508 / S288c) (Baker's yeast)).